A 658-amino-acid chain; its full sequence is Threonine--tRNA ligase (658 aa).

A TGS domain is found at 1 to 64; that stretch reads MSFSISLSFP…EQSGQVEIIT (64 aa). The tract at residues 246 to 549 is catalytic; it reads DHRRLGREMD…LIENFAGHMP (304 aa). The Zn(2+) site is built by cysteine 343, histidine 394, and histidine 526.

It belongs to the class-II aminoacyl-tRNA synthetase family. As to quaternary structure, homodimer. Requires Zn(2+) as cofactor.

Its subcellular location is the cytoplasm. The catalysed reaction is tRNA(Thr) + L-threonine + ATP = L-threonyl-tRNA(Thr) + AMP + diphosphate + H(+). Functionally, catalyzes the attachment of threonine to tRNA(Thr) in a two-step reaction: L-threonine is first activated by ATP to form Thr-AMP and then transferred to the acceptor end of tRNA(Thr). Also edits incorrectly charged L-seryl-tRNA(Thr). The polypeptide is Threonine--tRNA ligase (Bartonella bacilliformis (strain ATCC 35685 / KC583 / Herrer 020/F12,63)).